Reading from the N-terminus, the 378-residue chain is Protein RecA (378 aa).

An ATP-binding site is contributed by 79–86; that stretch reads GPESSGKT.

It belongs to the RecA family.

It is found in the cytoplasm. In terms of biological role, can catalyze the hydrolysis of ATP in the presence of single-stranded DNA, the ATP-dependent uptake of single-stranded DNA by duplex DNA, and the ATP-dependent hybridization of homologous single-stranded DNAs. It interacts with LexA causing its activation and leading to its autocatalytic cleavage. The chain is Protein RecA from Streptococcus equi subsp. zooepidemicus (strain MGCS10565).